Here is a 215-residue protein sequence, read N- to C-terminus: DNA polymerase III subunit epsilon (215 aa).

A divalent metal cation-binding residues include D19 and E21. Substrate-binding residues include D19, E21, D62, and N67. The Proton acceptor role is filled by H160. D165 is an a divalent metal cation binding site. A substrate-binding site is contributed by D165.

As to quaternary structure, DNA polymerase III contains a core (composed of alpha, epsilon and theta chains) that associates with a tau subunit. This core dimerizes to form the POLIII' complex. PolIII' associates with the gamma complex (composed of gamma, delta, delta', psi and chi chains) and with the beta chain to form the complete DNA polymerase III complex. Requires Mg(2+) as cofactor. The cofactor is Mn(2+).

The enzyme catalyses DNA(n) + a 2'-deoxyribonucleoside 5'-triphosphate = DNA(n+1) + diphosphate. In terms of biological role, DNA polymerase III is a complex, multichain enzyme responsible for most of the replicative synthesis in bacteria. The epsilon subunit contain the editing function and is a proofreading 3'-5' exonuclease. This Treponema pallidum (strain Nichols) protein is DNA polymerase III subunit epsilon (dnaQ).